The primary structure comprises 432 residues: Adenylosuccinate synthetase (432 aa).

GTP-binding positions include 13–19 (GDEGKGK) and 41–43 (GHT). Asp14 functions as the Proton acceptor in the catalytic mechanism. Mg(2+) contacts are provided by Asp14 and Gly41. IMP contacts are provided by residues 14-17 (DEGK), 39-42 (NAGH), Thr130, Arg144, Gln225, Thr240, and Arg304. Catalysis depends on His42, which acts as the Proton donor. 300–306 (ATTGRRR) lines the substrate pocket. Residues Arg306, 332–334 (KLD), and 415–417 (STG) each bind GTP.

This sequence belongs to the adenylosuccinate synthetase family. In terms of assembly, homodimer. The cofactor is Mg(2+).

Its subcellular location is the cytoplasm. The catalysed reaction is IMP + L-aspartate + GTP = N(6)-(1,2-dicarboxyethyl)-AMP + GDP + phosphate + 2 H(+). It functions in the pathway purine metabolism; AMP biosynthesis via de novo pathway; AMP from IMP: step 1/2. Plays an important role in the de novo pathway of purine nucleotide biosynthesis. Catalyzes the first committed step in the biosynthesis of AMP from IMP. The protein is Adenylosuccinate synthetase of Serratia proteamaculans (strain 568).